A 768-amino-acid chain; its full sequence is Probable dipeptidyl peptidase 4 (768 aa).

The signal sequence occupies residues 1 to 17 (MKLGKWSVLLLVGCTAA). Residues Asn-38, Asn-81, Asn-104, Asn-113, Asn-221, Asn-282, and Asn-468 are each glycosylated (N-linked (GlcNAc...) asparagine). The active-site Charge relay system is Ser-616. N-linked (GlcNAc...) asparagine glycosylation occurs at Asn-668. Residues Asp-693 and His-728 each act as charge relay system in the active site.

Belongs to the peptidase S9B family.

The protein localises to the secreted. It carries out the reaction Release of an N-terminal dipeptide, Xaa-Yaa-|-Zaa-, from a polypeptide, preferentially when Yaa is Pro, provided Zaa is neither Pro nor hydroxyproline.. Extracellular dipeptidyl-peptidase which removes N-terminal dipeptides sequentially from polypeptides having unsubstituted N-termini provided that the penultimate residue is proline. This Aspergillus clavatus (strain ATCC 1007 / CBS 513.65 / DSM 816 / NCTC 3887 / NRRL 1 / QM 1276 / 107) protein is Probable dipeptidyl peptidase 4 (dpp4).